The sequence spans 88 residues: Putative transposase InsN for insertion sequence element IS911B (88 aa).

This sequence belongs to the transposase 8 family.

In terms of biological role, involved in the transposition of the insertion sequence IS911. This Escherichia coli (strain K12) protein is Putative transposase InsN for insertion sequence element IS911B (insN2).